The sequence spans 276 residues: Large ribosomal subunit protein uL2 (276 aa).

Disordered regions lie at residues 35 to 55 and 222 to 276; these read APLHKKGGRNNQGRLTVRHQG and GSVM…RRKK. Residues 258–276 are compositionally biased toward basic residues; that stretch reads KTRKKNKHSDKYIVRRRKK.

It belongs to the universal ribosomal protein uL2 family. As to quaternary structure, part of the 50S ribosomal subunit. Forms a bridge to the 30S subunit in the 70S ribosome.

In terms of biological role, one of the primary rRNA binding proteins. Required for association of the 30S and 50S subunits to form the 70S ribosome, for tRNA binding and peptide bond formation. It has been suggested to have peptidyltransferase activity; this is somewhat controversial. Makes several contacts with the 16S rRNA in the 70S ribosome. The protein is Large ribosomal subunit protein uL2 of Shouchella clausii (strain KSM-K16) (Alkalihalobacillus clausii).